The primary structure comprises 260 residues: UPF0246 protein Tola_0968 (260 aa).

Belongs to the UPF0246 family.

The chain is UPF0246 protein Tola_0968 from Tolumonas auensis (strain DSM 9187 / NBRC 110442 / TA 4).